Reading from the N-terminus, the 168-residue chain is WAP four-disulfide core domain protein 2 (168 aa).

The N-terminal stretch at 1–30 (MPACRLCLLATGLLLGLLLFTPLSATGTRA) is a signal peptide. WAP domains are found at residues 31-74 (EKPG…SKPN) and 119-167 (NGEK…TTPK). 4 disulfides stabilise this stretch: C36/C62, C45/C66, C49/C61, and C55/C70. The disordered stretch occupies residues 100-123 (PLSRGQVSTKPPVVTKEGGNGEKQ). 4 disulfides stabilise this stretch: C126-C154, C137-C158, C141-C153, and C147-C163.

Homotrimer; disulfide-linked.

The protein localises to the secreted. In terms of biological role, broad range protease inhibitor. This Rattus norvegicus (Rat) protein is WAP four-disulfide core domain protein 2 (Wfdc2).